The primary structure comprises 374 residues: Potassium channel subfamily K member 9 (374 aa).

Over 1–8 (MKRQNVRT) the chain is Cytoplasmic. The helical transmembrane segment at 9-29 (LSLIVCTFTYLLVGAAVFDAL) threads the bilayer. Over 30–88 (ESDHEMREEEKLKAEEIRIKGKYNISSEDYRQLELVILQSEPHRAGVQWKFAGSFYFAI) the chain is Extracellular. A glycan (N-linked (GlcNAc...) asparagine) is linked at Asn53. The segment at residues 89-101 (TVITTIGYGHAAP) is an intramembrane region (pore-forming). The K(+) site is built by Thr93, Ile94, Gly95, and Tyr96. Residues 93 to 98 (TIGYGH) form a selectivity filter 1 region. Topologically, residues 102–107 (GTDAGK) are extracellular. The helical transmembrane segment at 108-128 (AFCMFYAVLGIPLTLVMFQSL) threads the bilayer. The Cytoplasmic portion of the chain corresponds to 129-158 (GERMNTFVRYLLKRIKKCCGMRNTDVSMEN). The helical transmembrane segment at 159–179 (MVTVGFFSCMGTLCIGAAAFS) threads the bilayer. Topologically, residues 180-194 (QCEEWSFFHAYYYCF) are extracellular. The pore-forming intramembrane region spans 195 to 207 (ITLTTIGFGDYVA). Residues Thr199, Ile200, Gly201, and Phe202 each coordinate K(+). A selectivity filter 2 region spans residues 199 to 204 (TIGFGD). At 208–218 (LQTKGALQKKP) the chain is on the extracellular side. A helical membrane pass occupies residues 219 to 239 (LYVAFSFMYILVGLTVIGAFL). The Cytoplasmic segment spans residues 240-374 (NLVVLRFLTM…QRLMKRRKSV (135 aa)). The tract at residues 243-248 (VLRFLT) is X-gate.

Belongs to the two pore domain potassium channel (TC 1.A.1.8) family. Homodimer. Heterodimer with KCNK1. Heterodimer with KCNK3. Mainly found in the cerebellum. Also found in adrenal gland, kidney and lung.

It is found in the cell membrane. The protein localises to the mitochondrion inner membrane. Its subcellular location is the cell projection. The protein resides in the dendrite. The enzyme catalyses K(+)(in) = K(+)(out). The catalysed reaction is Na(+)(in) = Na(+)(out). Inhibited by extracellular acidification adopting a nonconductive conformation at pH 6.0. Inhibited by phorbol 12-myristate 13-acetate (PMA). Functionally, k(+) channel that conducts voltage-dependent outward rectifying currents upon membrane depolarization. Voltage sensing is coupled to K(+) electrochemical gradient in an 'ion flux gating' mode where outward but not inward ion flow opens the gate. Changes ion selectivity and becomes permeable to Na(+) ions in response to extracellular acidification. Protonation of the pH sensor His-98 stabilizes C-type inactivation conformation likely converting the channel from outward K(+)-conducting, to inward Na(+)-conducting to nonconductive state. Homo- and heterodimerizes to form functional channels with distinct regulatory and gating properties. Allows K(+) currents with fast-gating kinetics important for the repolarization and hyperpolarization phases of action potentials. In granule neurons, hyperpolarizes the resting membrane potential to limit intrinsic neuronal excitability, but once the action potential threshold is reached, supports high-frequency action potential firing and increased neuronal excitability. Homomeric and/or heteromeric KCNK3:KCNK9 channels operate in cerebellar granule cells, whereas heteromeric KCNK1:KCNK9 enables currents in hippocampal dentate gyrus granule neurons. Dispensable for central chemosensory respiration i.e. breathing controlled by brainstem CO2/pH, it rather conducts pH-sensitive currents and controls the firing rate of serotonergic raphe neurons involved in potentiation of the respiratory chemoreflex. In retinal ganglion cells, mediates outward currents that regulate action potentials in response to acidification of the synaptic cleft. Involved in transmission of image-forming and nonimage-forming visual information in the retina. In adrenal gland, contributes to the maintenance of a hyperpolarized resting membrane potential of aldosterone-producing cells at zona glomerulosa and limits aldosterone release as part of a regulatory mechanism that controls arterial blood pressure and electrolyte homeostasis. This Homo sapiens (Human) protein is Potassium channel subfamily K member 9.